Here is a 500-residue protein sequence, read N- to C-terminus: Glutamate--tRNA ligase (500 aa).

The 'HIGH' region signature appears at 12 to 22 (PSPTGHLHIGN). A 'KMSKS' region motif is present at residues 259–263 (KLSKR). Lysine 262 serves as a coordination point for ATP.

It belongs to the class-I aminoacyl-tRNA synthetase family. Glutamate--tRNA ligase type 1 subfamily. In terms of assembly, monomer.

It is found in the cytoplasm. It carries out the reaction tRNA(Glu) + L-glutamate + ATP = L-glutamyl-tRNA(Glu) + AMP + diphosphate. Catalyzes the attachment of glutamate to tRNA(Glu) in a two-step reaction: glutamate is first activated by ATP to form Glu-AMP and then transferred to the acceptor end of tRNA(Glu). The polypeptide is Glutamate--tRNA ligase (Lactobacillus delbrueckii subsp. bulgaricus).